The following is a 409-amino-acid chain: MKFILPLFTSLPVALAWLPGIDKDIYSAAGTNIFNVTSASSKRWLPASKKIRGVNLGSHFVIEPWMASMAWSNMGCSGQRSEFDCVMALGQETADQAFADHWGSWITQDDINQMVQYGLNTIRIPVGYWLKEDLVYADSEHFPKGGIGYLEDVCGWASDAGMYIIIDLHGAPGAQQPKQPFTGQYAPNPGFYQDYQYDRALEFLEWMTTSIHQNNKFRNVGMLEIVNEPVQNADQASSMINSYYPSAFTRIRNTESSLGITSNNYLHIQMMNEKWGSGDPTQSLTDNYFAAYDDHRYVKWDSSVAVDKESYISASCVDDRGGNWPTIVGEWSLSVPDNVEHTADWEPSSNTDFYARWFAAQAIAYEKQEGWVFWSWKAQLGDYRWSYKDAVDAGVIPKDLDSIYDYSPC.

Positions Met1–Ala16 are cleaved as a signal peptide. Asn35 carries N-linked (GlcNAc...) asparagine glycosylation. The active-site Proton donor is Glu228. The Nucleophile role is filled by Glu330.

Belongs to the glycosyl hydrolase 5 (cellulase A) family.

It is found in the secreted. It catalyses the reaction Random hydrolysis of (1-&gt;6)-linkages in (1-&gt;6)-beta-D-glucans.. Beta-glucanases participate in the metabolism of beta-glucan, the main structural component of the cell wall. Acts on lutean, pustulan and 1,6-oligo-beta-D-glucosides. The polypeptide is Glucan endo-1,6-beta-glucosidase B (exgB) (Emericella nidulans (strain FGSC A4 / ATCC 38163 / CBS 112.46 / NRRL 194 / M139) (Aspergillus nidulans)).